A 315-amino-acid chain; its full sequence is tRNA wybutosine-synthesizing protein 5 (315 aa).

A JmjC domain is found at D102–K267. Residue Y106 participates in 2-oxoglutarate binding. Fe cation is bound by residues H160 and D162. 2 residues coordinate 2-oxoglutarate: N166 and K175. Fe cation is bound at residue H235.

It belongs to the TYW5 family. In terms of assembly, homodimer. The cofactor is Fe(2+).

The enzyme catalyses 7-[(3S)-3-amino-3-carboxypropyl]wyosine(37) in tRNA(Phe) + 2-oxoglutarate + O2 = 7-(2-hydroxy-3-amino-3-carboxypropyl)wyosine(37) in tRNA(Phe) + succinate + CO2. The protein operates within tRNA modification; wybutosine-tRNA(Phe) biosynthesis. TRNA hydroxylase that acts as a component of the wybutosine biosynthesis pathway. Wybutosine is a hyper modified guanosine with a tricyclic base found at the 3'-position adjacent to the anticodon of eukaryotic phenylalanine tRNA. Catalyzes the hydroxylation of 7-(a-amino-a-carboxypropyl)wyosine (yW-72) into undermodified hydroxywybutosine (OHyW*). OHyW* being further transformed into hydroxywybutosine (OHyW) by LCMT2/TYW4. OHyW is a derivative of wybutosine found in higher eukaryotes. The polypeptide is tRNA wybutosine-synthesizing protein 5 (TYW5) (Homo sapiens (Human)).